Here is a 352-residue protein sequence, read N- to C-terminus: Putative squamosa promoter-binding-like protein 19 (352 aa).

Residues 68-88 are disordered; it reads AAAPATRRARGGSGGGGGGGG. Over residues 78-88 the composition is skewed to gly residues; that stretch reads GGSGGGGGGGG. The SBP-type zinc-finger motif lies at 90 to 167; sequence AEACSVDGCR…DGHNRRRRKP (78 aa). Residues Cys-93, Cys-98, Cys-115, His-118, Cys-134, Cys-137, His-141, and Cys-153 each coordinate Zn(2+). Positions 150 to 166 match the Bipartite nuclear localization signal motif; sequence KKSCRKRLDGHNRRRRK. Residues 152-174 form a disordered region; the sequence is SCRKRLDGHNRRRRKPQHDALNP.

The protein localises to the nucleus. Trans-acting factor that binds specifically to the consensus nucleotide sequence 5'-TNCGTACAA-3'. The protein is Putative squamosa promoter-binding-like protein 19 (SPL19) of Oryza sativa subsp. japonica (Rice).